The chain runs to 329 residues: Endo-beta-N-acetylglucosaminidase F3 (329 aa).

Positions 1–39 form a signal peptide, or 40, or 41; the sequence is MKKIFFAQCSILLLMLGSCSKMTEDMTPESVNKEASVKS. Residues 48–329 form the GH18 domain; it reads GVCIAYYITD…ANAVRDAVKN (282 aa). A glycan (O-linked (Man...) threonine) is linked at Thr-88. The active-site Proton donor is Glu-167.

The protein belongs to the glycosyl hydrolase 18 family. As to quaternary structure, monomer. In terms of processing, carbohydrate at Thr-88 consists of (2-OMe)Man1-4GlcNAcU1-4GlcU1-4Glc1-4(2-OMe)GlcU1-4[(2-OMe)Rham1-2]Man.

It localises to the secreted. The catalysed reaction is an N(4)-(oligosaccharide-(1-&gt;3)-[oligosaccharide-(1-&gt;6)]-beta-D-Man-(1-&gt;4)-beta-D-GlcNAc-(1-&gt;4)-alpha-D-GlcNAc)-L-asparaginyl-[protein] + H2O = an oligosaccharide-(1-&gt;3)-[oligosaccharide-(1-&gt;6)]-beta-D-Man-(1-&gt;4)-D-GlcNAc + N(4)-(N-acetyl-beta-D-glucosaminyl)-L-asparaginyl-[protein]. In terms of biological role, endohydrolysis of the di-N-acetylchitobiosyl unit in high-mannose glycopeptides and glycoproteins. Hydrolyzes bi- and triantennary glycans. The presence of a core-bound fucose greatly augments endo F3 activity on biantennary and, presumably, triantennary oligosaccharides. The polypeptide is Endo-beta-N-acetylglucosaminidase F3 (endOF3) (Elizabethkingia meningoseptica (Chryseobacterium meningosepticum)).